Reading from the N-terminus, the 166-residue chain is CDP-archaeol synthase (166 aa).

Transmembrane regions (helical) follow at residues 1–21 (MPII…LVAN), 55–75 (LLVA…FLGI), 78–98 (IYVS…GAFI), 110–130 (AIGL…IISK), and 131–151 (ISLN…LHIL).

The protein belongs to the CDP-archaeol synthase family. The cofactor is Mg(2+).

The protein localises to the cell membrane. The enzyme catalyses 2,3-bis-O-(geranylgeranyl)-sn-glycerol 1-phosphate + CTP + H(+) = CDP-2,3-bis-O-(geranylgeranyl)-sn-glycerol + diphosphate. The protein operates within membrane lipid metabolism; glycerophospholipid metabolism. In terms of biological role, catalyzes the formation of CDP-2,3-bis-(O-geranylgeranyl)-sn-glycerol (CDP-archaeol) from 2,3-bis-(O-geranylgeranyl)-sn-glycerol 1-phosphate (DGGGP) and CTP. This reaction is the third ether-bond-formation step in the biosynthesis of archaeal membrane lipids. This is CDP-archaeol synthase from Sulfurisphaera tokodaii (strain DSM 16993 / JCM 10545 / NBRC 100140 / 7) (Sulfolobus tokodaii).